Reading from the N-terminus, the 253-residue chain is 5-oxoprolinase subunit A (253 aa).

Belongs to the LamB/PxpA family. Forms a complex composed of PxpA, PxpB and PxpC.

The catalysed reaction is 5-oxo-L-proline + ATP + 2 H2O = L-glutamate + ADP + phosphate + H(+). Functionally, catalyzes the cleavage of 5-oxoproline to form L-glutamate coupled to the hydrolysis of ATP to ADP and inorganic phosphate. The polypeptide is 5-oxoprolinase subunit A (Bacillus cereus (strain AH820)).